Consider the following 227-residue polypeptide: Cytochrome c oxidase subunit 2 (227 aa).

Residues 1 to 26 (MATWSNLSIQDGASPLMEQLSFFHDD) lie on the Mitochondrial intermembrane side of the membrane. The chain crosses the membrane as a helical span at residues 27-48 (HTMVVLLITVIVGYALSYMLFN). Over 49–62 (AYTNRNMLHGHLIE) the chain is Mitochondrial matrix. A helical membrane pass occupies residues 63–82 (TIWTALPAITLIFIALPSLR). The Mitochondrial intermembrane segment spans residues 83-227 (LLYLLDDSVD…LFIKWLSKMI (145 aa)). Cu cation is bound by residues histidine 161, cysteine 196, glutamate 198, cysteine 200, histidine 204, and methionine 207. Glutamate 198 is a binding site for Mg(2+).

This sequence belongs to the cytochrome c oxidase subunit 2 family. Component of the cytochrome c oxidase (complex IV, CIV), a multisubunit enzyme composed of a catalytic core of 3 subunits and several supernumerary subunits. The complex exists as a monomer or a dimer and forms supercomplexes (SCs) in the inner mitochondrial membrane with ubiquinol-cytochrome c oxidoreductase (cytochrome b-c1 complex, complex III, CIII). The cofactor is Cu cation.

It is found in the mitochondrion inner membrane. It carries out the reaction 4 Fe(II)-[cytochrome c] + O2 + 8 H(+)(in) = 4 Fe(III)-[cytochrome c] + 2 H2O + 4 H(+)(out). In terms of biological role, component of the cytochrome c oxidase, the last enzyme in the mitochondrial electron transport chain which drives oxidative phosphorylation. The respiratory chain contains 3 multisubunit complexes succinate dehydrogenase (complex II, CII), ubiquinol-cytochrome c oxidoreductase (cytochrome b-c1 complex, complex III, CIII) and cytochrome c oxidase (complex IV, CIV), that cooperate to transfer electrons derived from NADH and succinate to molecular oxygen, creating an electrochemical gradient over the inner membrane that drives transmembrane transport and the ATP synthase. Cytochrome c oxidase is the component of the respiratory chain that catalyzes the reduction of oxygen to water. Electrons originating from reduced cytochrome c in the intermembrane space (IMS) are transferred via the dinuclear copper A center (CU(A)) of subunit 2 and heme A of subunit 1 to the active site in subunit 1, a binuclear center (BNC) formed by heme A3 and copper B (CU(B)). The BNC reduces molecular oxygen to 2 water molecules using 4 electrons from cytochrome c in the IMS and 4 protons from the mitochondrial matrix. The sequence is that of Cytochrome c oxidase subunit 2 (COII) from Schistocerca gregaria (Desert locust).